The sequence spans 46 residues: U2-plectoxin-Pt1a (46 aa).

Post-translationally, contains 4 disulfide bonds. As to expression, expressed by the venom gland.

The protein resides in the secreted. Its function is as follows. Potent toxin that may paralyze and/or kill insect pests such as H.virescens (lepidoptera), S.exigua (beet armyworm) and M.sexta (tobacco hornworm). This chain is U2-plectoxin-Pt1a, found in Plectreurys tristis (Spider).